Here is a 397-residue protein sequence, read N- to C-terminus: Phosphopentomutase (397 aa).

Mn(2+) contacts are provided by Asp-10, Asp-296, His-301, Asp-337, His-338, and His-349.

It belongs to the phosphopentomutase family. Requires Mn(2+) as cofactor.

The protein resides in the cytoplasm. It catalyses the reaction 2-deoxy-alpha-D-ribose 1-phosphate = 2-deoxy-D-ribose 5-phosphate. The enzyme catalyses alpha-D-ribose 1-phosphate = D-ribose 5-phosphate. It functions in the pathway carbohydrate degradation; 2-deoxy-D-ribose 1-phosphate degradation; D-glyceraldehyde 3-phosphate and acetaldehyde from 2-deoxy-alpha-D-ribose 1-phosphate: step 1/2. Its function is as follows. Isomerase that catalyzes the conversion of deoxy-ribose 1-phosphate (dRib-1-P) and ribose 1-phosphate (Rib-1-P) to deoxy-ribose 5-phosphate (dRib-5-P) and ribose 5-phosphate (Rib-5-P), respectively. This is Phosphopentomutase from Elusimicrobium minutum (strain Pei191).